Consider the following 399-residue polypeptide: Succinate--CoA ligase [ADP-forming] subunit beta (399 aa).

The ATP-grasp domain occupies lysine 9–glutamate 254. Residues lysine 46, glycine 53–glycine 55, glutamate 109, alanine 112, and glutamate 117 each bind ATP. Mg(2+) contacts are provided by asparagine 209 and aspartate 223. Residues asparagine 274 and glycine 331–methionine 333 contribute to the substrate site.

It belongs to the succinate/malate CoA ligase beta subunit family. In terms of assembly, heterotetramer of two alpha and two beta subunits. Mg(2+) is required as a cofactor.

It carries out the reaction succinate + ATP + CoA = succinyl-CoA + ADP + phosphate. The catalysed reaction is GTP + succinate + CoA = succinyl-CoA + GDP + phosphate. It functions in the pathway carbohydrate metabolism; tricarboxylic acid cycle; succinate from succinyl-CoA (ligase route): step 1/1. Its function is as follows. Succinyl-CoA synthetase functions in the citric acid cycle (TCA), coupling the hydrolysis of succinyl-CoA to the synthesis of either ATP or GTP and thus represents the only step of substrate-level phosphorylation in the TCA. The beta subunit provides nucleotide specificity of the enzyme and binds the substrate succinate, while the binding sites for coenzyme A and phosphate are found in the alpha subunit. The protein is Succinate--CoA ligase [ADP-forming] subunit beta of Caulobacter vibrioides (strain NA1000 / CB15N) (Caulobacter crescentus).